Consider the following 141-residue polypeptide: Auxin-responsive protein SAUR64 (141 aa).

It belongs to the ARG7 family.

It localises to the cell membrane. In terms of biological role, may promote auxin-stimulated organ elongation, such as hypocotyls, stamen filaments and petals. The sequence is that of Auxin-responsive protein SAUR64 from Arabidopsis thaliana (Mouse-ear cress).